The following is a 1361-amino-acid chain: Zinc finger protein GLI4 (1361 aa).

Residues 185 to 270 (SSFGHTPLLH…PQPPDHLTDL (86 aa)) form a disordered region. 2 stretches are compositionally biased toward polar residues: residues 198-208 (TFASRQQGALT) and 227-241 (NKVSSESAVSSTVNQ). C2H2-type zinc fingers lie at residues 289–314 (TNCHWDGCSKEFDTQDQLVHHINNDH), 322–349 (FVCRWQDCSREQKPFKAQYMLVVHMRRH), 355–379 (HKCTFEGCFKAYSRLENLKTHLRSH), 385–410 (YVCDHEGCNKAFSNASDRAKHQNRTH), and 416–441 (YICKVPGCTKRYTDPSSLRKHVKTVH). Disordered regions lie at residues 434–527 (RKHV…TNNI), 556–584 (STVSSWQRSGRPATPETQRIHSAETGTAE), 647–720 (NERR…LPNL), 787–832 (NAGL…SMNS), 906–946 (QNRE…APGA), and 1134–1230 (DGLH…PKDN). Over residues 475–502 (SGREHSDSVSRDQEHCLQTRTIKTEDNM) the composition is skewed to basic and acidic residues. Over residues 506-522 (SSPGGQSSCSSEPSPYG) the composition is skewed to low complexity. Basic and acidic residues predominate over residues 573–584 (QRIHSAETGTAE). Low complexity predominate over residues 653–670 (TSSTLSSAYTSRRSSGIS). Polar residues-rich tracts occupy residues 672-695 (YFSSRRSSETSQFGGRLNNSSSAD) and 710-720 (EASQHSGLPNL). The segment covering 805-821 (RASDPVRRTAGIDDKPL) has biased composition (basic and acidic residues). 2 stretches are compositionally biased toward polar residues: residues 913–939 (QNLQTEYSSPARNLQSNTKSFHNNTPE) and 1142–1164 (YTVQPQKNGLEPQQNTLGMSGQA). Positions 1172-1183 (PRPPAAPHPPNR) are enriched in pro residues.

The protein belongs to the GLI C2H2-type zinc-finger protein family.

The protein resides in the nucleus. Has an essential role in the early embryonic patterning of mesoderm and neuroectoderm. This Xenopus laevis (African clawed frog) protein is Zinc finger protein GLI4 (gli4).